Consider the following 386-residue polypeptide: GTPase Obg (386 aa).

Positions 1 to 159 (MKFVDEAVIR…RSLKLELMLL (159 aa)) constitute an Obg domain. In terms of domain architecture, OBG-type G spans 160 to 333 (ADVGLLGMPN…LSLKLVDFID (174 aa)). Residues 166–173 (GMPNAGKS), 191–195 (FTTLV), 213–216 (DIPG), 283–286 (NKKD), and 314–316 (SAY) contribute to the GTP site. The Mg(2+) site is built by S173 and T193. The tract at residues 356-375 (KDSDSLNEDFDDSDDDDFDD) is disordered. Positions 360 to 375 (SLNEDFDDSDDDDFDD) are enriched in acidic residues.

This sequence belongs to the TRAFAC class OBG-HflX-like GTPase superfamily. OBG GTPase family. In terms of assembly, monomer. It depends on Mg(2+) as a cofactor.

It localises to the cytoplasm. In terms of biological role, an essential GTPase which binds GTP, GDP and possibly (p)ppGpp with moderate affinity, with high nucleotide exchange rates and a fairly low GTP hydrolysis rate. Plays a role in control of the cell cycle, stress response, ribosome biogenesis and in those bacteria that undergo differentiation, in morphogenesis control. The sequence is that of GTPase Obg from Shewanella sediminis (strain HAW-EB3).